A 346-amino-acid polypeptide reads, in one-letter code: Glucose-6-phosphatase 3 (346 aa).

Residues 1–24 lie on the Lumenal side of the membrane; that stretch reads MESTLSAGIIMAEALQNRLPGLEN. A helical membrane pass occupies residues 25–45; sequence MWLWVTFLGDPKNLFQFCFPA. The Cytoplasmic portion of the chain corresponds to 46-56; the sequence is AYYASRRLGIS. A helical transmembrane segment spans residues 57 to 77; it reads VLWITFIAEWLNLVFKWFLFG. At 78–108 the chain is on the lumenal side; it reads DRPFWWVHESGYSTQTPIQIHQFPSSCETGP. Arg-79 contributes to the substrate binding site. The chain crosses the membrane as a helical span at residues 109–129; that stretch reads GSPSGHCMITGAALWPVMTAI. His-114 serves as the catalytic Proton donor. Residues 130–138 are Cytoplasmic-facing; the sequence is SSQVASRSR. Residues 139 to 159 form a helical membrane-spanning segment; that stretch reads SPWVRVIPGLAYCTFLLAVGL. At 160–167 the chain is on the lumenal side; that stretch reads SRVFLLAH. Residue Arg-161 participates in substrate binding. His-167 serves as the catalytic Nucleophile. A helical transmembrane segment spans residues 168-186; the sequence is FPHQVLGGLIVGAALGWLM. Residues 187 to 197 are Cytoplasmic-facing; the sequence is SPRVPMERELS. Residues 198-218 traverse the membrane as a helical segment; sequence FYGLTALALMLGASLMYWTLF. Residues 219–254 are Lumenal-facing; sequence TLGLDLSWSINLASKWCERPEWVHMDSRPFASLSRD. A helical membrane pass occupies residues 255–273; it reads SGSALGLGIALHTPCYAQI. Topologically, residues 274–283 are cytoplasmic; that stretch reads RRAHLGNGQK. A helical transmembrane segment spans residues 284–304; that stretch reads IACFVLAMGLLVFLEWLGYPP. Residues 305–307 lie on the Lumenal side of the membrane; the sequence is QIS. Residues 308–328 form a helical membrane-spanning segment; it reads LFYIFNFLKYTLWPCLVLALV. Residues 329–346 are Cytoplasmic-facing; sequence PWVVHTLSDQEAPPIRSS.

Belongs to the glucose-6-phosphatase family. As to expression, widely expressed. Highly expressed in heart and testis and to a lower extent in spleen, stomach, small intestine, skeletal muscle and uterus. Expressed in muscle, brain, thymus, lung, kidney, spleen and pancreas (at protein level). In the brain, expressed in astrocytes (at protein level).

The protein localises to the endoplasmic reticulum membrane. The catalysed reaction is D-glucose 6-phosphate + H2O = D-glucose + phosphate. It functions in the pathway carbohydrate biosynthesis; gluconeogenesis. Inhibited by vanadate. Hydrolyzes glucose-6-phosphate to glucose in the endoplasmic reticulum. May form with the glucose-6-phosphate transporter (SLC37A4/G6PT) a ubiquitously expressed complex responsible for glucose production through glycogenolysis and gluconeogenesis. Probably required for normal neutrophil function. This Mus musculus (Mouse) protein is Glucose-6-phosphatase 3 (G6pc3).